The following is a 763-amino-acid chain: Lysine-specific histone demethylase 1 homolog 2 (763 aa).

Positions 53-152 (QRETETEALI…FGVSAAFPAS (100 aa)) constitute an SWIRM domain. Residues Glu192, Arg194, Arg200, and Glu571 each coordinate FAD.

It belongs to the flavin monoamine oxidase family. Requires FAD as cofactor.

Functionally, probable histone demethylase. The protein is Lysine-specific histone demethylase 1 homolog 2 of Oryza sativa subsp. japonica (Rice).